We begin with the raw amino-acid sequence, 274 residues long: Putative phosphatase BUsg_029 (274 aa).

The active-site Nucleophile is D8. D8 contributes to the Mg(2+) binding site. L9 provides a ligand contact to phosphate. D10 contacts Mg(2+). Phosphate contacts are provided by residues 42-43 (SG) and K191. D214 is a binding site for Mg(2+). N217 is a phosphate binding site.

Belongs to the HAD-like hydrolase superfamily. Cof family. The cofactor is Mg(2+).

The polypeptide is Putative phosphatase BUsg_029 (Buchnera aphidicola subsp. Schizaphis graminum (strain Sg)).